The primary structure comprises 62 residues: UPF0434 protein Tola_2233 (62 aa).

It belongs to the UPF0434 family.

The chain is UPF0434 protein Tola_2233 from Tolumonas auensis (strain DSM 9187 / NBRC 110442 / TA 4).